The chain runs to 507 residues: Chromosomal replication initiator protein DnaA (507 aa).

The interval 1 to 87 (MSVELWQQCV…IGSKRSSAPR (87 aa)) is domain I, interacts with DnaA modulators. Positions 85-110 (APRAAPNAPLAAAQVSQAQANAAPAS) are enriched in low complexity. The disordered stretch occupies residues 85-158 (APRAAPNAPL…QQAPVRAEQR (74 aa)). The interval 87 to 170 (RAAPNAPLAA…QVEGALKHTS (84 aa)) is domain II. Basic and acidic residues predominate over residues 126–140 (QKTEEISEEPSRDSF). The domain III, AAA+ region stretch occupies residues 171–387 (YLNRTFTFEN…GALKRVIAHS (217 aa)). ATP-binding residues include Gly-215, Gly-217, Lys-218, and Thr-219. The interval 388-507 (HFMGRDITIE…YKNLLRTLTT (120 aa)) is domain IV, binds dsDNA.

The protein belongs to the DnaA family. Oligomerizes as a right-handed, spiral filament on DNA at oriC.

It localises to the cytoplasm. In terms of biological role, plays an essential role in the initiation and regulation of chromosomal replication. ATP-DnaA binds to the origin of replication (oriC) to initiate formation of the DNA replication initiation complex once per cell cycle. Binds the DnaA box (a 9 base pair repeat at the origin) and separates the double-stranded (ds)DNA. Forms a right-handed helical filament on oriC DNA; dsDNA binds to the exterior of the filament while single-stranded (ss)DNA is stabiized in the filament's interior. The ATP-DnaA-oriC complex binds and stabilizes one strand of the AT-rich DNA unwinding element (DUE), permitting loading of DNA polymerase. After initiation quickly degrades to an ADP-DnaA complex that is not apt for DNA replication. Binds acidic phospholipids. The protein is Chromosomal replication initiator protein DnaA of Pseudomonas fluorescens (strain Pf0-1).